The chain runs to 334 residues: Transposase for insertion sequence element IS1328 (334 aa).

It belongs to the transposase IS1111A/IS1328/IS1533 family.

Its function is as follows. Required for the transposition of the insertion element. The chain is Transposase for insertion sequence element IS1328 from Yersinia enterocolitica.